Reading from the N-terminus, the 100-residue chain is uncharacterized protein (100 aa).

The disordered stretch occupies residues methionine 1–proline 86. A compositionally biased stretch (pro residues) spans aspartate 35–leucine 48.

This is an uncharacterized protein from Human herpesvirus 6A (strain Uganda-1102) (HHV-6 variant A).